A 254-amino-acid chain; its full sequence is Hydroxyacylglutathione hydrolase (254 aa).

Zn(2+) contacts are provided by His54, His56, Asp58, His59, His111, Asp130, and His168.

Belongs to the metallo-beta-lactamase superfamily. Glyoxalase II family. As to quaternary structure, monomer. Zn(2+) serves as cofactor.

The catalysed reaction is an S-(2-hydroxyacyl)glutathione + H2O = a 2-hydroxy carboxylate + glutathione + H(+). It functions in the pathway secondary metabolite metabolism; methylglyoxal degradation; (R)-lactate from methylglyoxal: step 2/2. Thiolesterase that catalyzes the hydrolysis of S-D-lactoyl-glutathione to form glutathione and D-lactic acid. The protein is Hydroxyacylglutathione hydrolase of Legionella pneumophila (strain Paris).